A 167-amino-acid polypeptide reads, in one-letter code: SsrA-binding protein (167 aa).

The disordered stretch occupies residues 144–167 (HDKRAADKEKQSKKEVRSAMAKYQ). Positions 146–160 (KRAADKEKQSKKEVR) are enriched in basic and acidic residues.

Belongs to the SmpB family.

It localises to the cytoplasm. Required for rescue of stalled ribosomes mediated by trans-translation. Binds to transfer-messenger RNA (tmRNA), required for stable association of tmRNA with ribosomes. tmRNA and SmpB together mimic tRNA shape, replacing the anticodon stem-loop with SmpB. tmRNA is encoded by the ssrA gene; the 2 termini fold to resemble tRNA(Ala) and it encodes a 'tag peptide', a short internal open reading frame. During trans-translation Ala-aminoacylated tmRNA acts like a tRNA, entering the A-site of stalled ribosomes, displacing the stalled mRNA. The ribosome then switches to translate the ORF on the tmRNA; the nascent peptide is terminated with the 'tag peptide' encoded by the tmRNA and targeted for degradation. The ribosome is freed to recommence translation, which seems to be the essential function of trans-translation. In Synechococcus sp. (strain CC9902), this protein is SsrA-binding protein.